The following is a 112-amino-acid chain: Putative pterin-4-alpha-carbinolamine dehydratase (112 aa).

The protein belongs to the pterin-4-alpha-carbinolamine dehydratase family.

The enzyme catalyses (4aS,6R)-4a-hydroxy-L-erythro-5,6,7,8-tetrahydrobiopterin = (6R)-L-erythro-6,7-dihydrobiopterin + H2O. This Photobacterium profundum (strain SS9) protein is Putative pterin-4-alpha-carbinolamine dehydratase.